The primary structure comprises 467 residues: Hydroxyacid-oxoacid transhydrogenase, mitochondrial (467 aa).

The residue at position 445 (lysine 445) is an N6-acetyllysine. Serine 452 carries the post-translational modification Phosphoserine.

Belongs to the iron-containing alcohol dehydrogenase family. Hydroxyacid-oxoacid transhydrogenase subfamily.

It is found in the mitochondrion. It carries out the reaction (S)-3-hydroxybutanoate + 2-oxoglutarate = (R)-2-hydroxyglutarate + acetoacetate. It catalyses the reaction 4-hydroxybutanoate + 2-oxoglutarate = (R)-2-hydroxyglutarate + succinate semialdehyde. Its function is as follows. Catalyzes the cofactor-independent reversible oxidation of gamma-hydroxybutyrate (GHB) to succinic semialdehyde (SSA) coupled to reduction of 2-ketoglutarate (2-KG) to D-2-hydroxyglutarate (D-2-HG). L-3-hydroxybutyrate (L-3-OHB) is also a substrate for HOT when using 2-KG as hydrogen acceptor, resulting in the formation of D-2-HG. In Pongo abelii (Sumatran orangutan), this protein is Hydroxyacid-oxoacid transhydrogenase, mitochondrial (ADHFE1).